Reading from the N-terminus, the 263-residue chain is (E)-2-((N-methylformamido)methylene)succinate hydrolase (263 aa).

Residue Ser96 is the Nucleophile of the active site. Active-site residues include Asn120 and His241.

It belongs to the AB hydrolase superfamily. As to quaternary structure, monomer.

The catalysed reaction is (E)-2-((N-methylformamido) methylene)succinate + 2 H2O + H(+) = succinate semialdehyde + methylamine + formate + CO2. Involved in the degradation of the pyridine ring of trigonelline (TG; N-methylnicotinate) into succinate and methylamine as carbon and nitrogen sources, respectively. Catalyzes the hydrolysis of (E)-2-((N-methylformamido)methylene)succinate (MFMS) into formic acid, succinate semialdehyde (SSA), methylamine and carbon dioxide. This Acinetobacter baylyi (strain ATCC 33305 / BD413 / ADP1) protein is (E)-2-((N-methylformamido)methylene)succinate hydrolase.